Here is a 199-residue protein sequence, read N- to C-terminus: Nucleoid occlusion factor SlmA (199 aa).

Positions 10-71 constitute an HTH tetR-type domain; that stretch reads RNRREEILQA…SLIEFIEDSL (62 aa). The segment at residues 34–53 is a DNA-binding region (H-T-H motif); it reads TTAKLAANVGVSEAALYRHF. Residues 120–140 are a coiled coil; the sequence is NRLQGRINQLFERIEVQIRQV.

The protein belongs to the nucleoid occlusion factor SlmA family. Homodimer. Interacts with FtsZ.

It localises to the cytoplasm. It is found in the nucleoid. Its function is as follows. Required for nucleoid occlusion (NO) phenomenon, which prevents Z-ring formation and cell division over the nucleoid. Acts as a DNA-associated cell division inhibitor that binds simultaneously chromosomal DNA and FtsZ, and disrupts the assembly of FtsZ polymers. SlmA-DNA-binding sequences (SBS) are dispersed on non-Ter regions of the chromosome, preventing FtsZ polymerization at these regions. This is Nucleoid occlusion factor SlmA from Photorhabdus laumondii subsp. laumondii (strain DSM 15139 / CIP 105565 / TT01) (Photorhabdus luminescens subsp. laumondii).